Here is a 472-residue protein sequence, read N- to C-terminus: Protein c-ets-2-B (472 aa).

The 86-residue stretch at 85–170 folds into the PNT domain; sequence DTFNGFAKER…EHLEEMMKEY (86 aa). Residues 366 to 446 constitute a DNA-binding region (ETS); sequence IQLWQFLLEL…SGKRYVYRFV (81 aa).

The protein belongs to the ETS family.

It is found in the nucleus. Functionally, probable transcription factor. The protein is Protein c-ets-2-B (ets2-b) of Xenopus laevis (African clawed frog).